Here is an 85-residue protein sequence, read N- to C-terminus: Probable dolichol-phosphate mannosyltransferase subunit 3 (85 aa).

Transmembrane regions (helical) follow at residues 13–33 (VLLV…LSYI) and 37–57 (AHCL…VATF).

Belongs to the DPM3 family.

It is found in the endoplasmic reticulum membrane. It functions in the pathway protein modification; protein glycosylation. Its function is as follows. Stabilizer subunit of the dolichol-phosphate-mannose synthase complex. This is Probable dolichol-phosphate mannosyltransferase subunit 3 from Caenorhabditis briggsae.